A 663-amino-acid chain; its full sequence is DNA ligase (663 aa).

Residues 33–37, 82–83, and glutamate 112 contribute to the NAD(+) site; these read DYSYD and SI. Lysine 114 acts as the N6-AMP-lysine intermediate in catalysis. Residues arginine 135, glutamate 171, lysine 285, and lysine 309 each contribute to the NAD(+) site. Zn(2+) is bound by residues cysteine 403, cysteine 406, cysteine 419, and cysteine 424. Positions 581 to 663 constitute a BRCT domain; it reads DKEAPLQGKV…SRILDAKSVS (83 aa).

Belongs to the NAD-dependent DNA ligase family. LigA subfamily. Mg(2+) serves as cofactor. The cofactor is Mn(2+).

The enzyme catalyses NAD(+) + (deoxyribonucleotide)n-3'-hydroxyl + 5'-phospho-(deoxyribonucleotide)m = (deoxyribonucleotide)n+m + AMP + beta-nicotinamide D-nucleotide.. DNA ligase that catalyzes the formation of phosphodiester linkages between 5'-phosphoryl and 3'-hydroxyl groups in double-stranded DNA using NAD as a coenzyme and as the energy source for the reaction. It is essential for DNA replication and repair of damaged DNA. This chain is DNA ligase, found in Chlamydia trachomatis serovar L2 (strain ATCC VR-902B / DSM 19102 / 434/Bu).